The sequence spans 217 residues: Small ribosomal subunit protein uS3 (217 aa).

Residues 24–93 (IKEFLEYKLS…NPQIDVIDVS (70 aa)) enclose the KH type-2 domain.

This sequence belongs to the universal ribosomal protein uS3 family. In terms of assembly, part of the 30S ribosomal subunit.

Functionally, binds the lower part of the 30S subunit head. The protein is Small ribosomal subunit protein uS3 of Pyrobaculum islandicum (strain DSM 4184 / JCM 9189 / GEO3).